Reading from the N-terminus, the 207-residue chain is Testis-expressed protein 35 (207 aa).

The stretch at R43–F79 forms a coiled coil.

As to expression, testis-specific. Expressed during spermatogenesis.

The protein resides in the nucleus. This Mus musculus (Mouse) protein is Testis-expressed protein 35 (Tex35).